Here is a 475-residue protein sequence, read N- to C-terminus: Rho GTPase-activating protein 15 (475 aa).

The segment at 1–22 is disordered; it reads MERSTTSDTASEKPNPSHSTGA. The PH domain maps to 80–190; it reads VVEKEGYLLK…WFHAIKNAID (111 aa). The Rho-GAP domain maps to 281–470; sequence SHLHLVCEHE…LMLSEYSKIF (190 aa).

It localises to the cytoplasm. The protein localises to the membrane. In terms of biological role, GTPase activator for the Rho-type GTPases by converting them to an inactive GDP-bound state. The sequence is that of Rho GTPase-activating protein 15 (ARHGAP15) from Gallus gallus (Chicken).